A 97-amino-acid chain; its full sequence is UPF0235 protein AZOSEA09540 (97 aa).

It belongs to the UPF0235 family.

The protein is UPF0235 protein AZOSEA09540 of Aromatoleum aromaticum (strain DSM 19018 / LMG 30748 / EbN1) (Azoarcus sp. (strain EbN1)).